A 380-amino-acid chain; its full sequence is Cystathionine beta-lyase (380 aa).

Lys-196 is modified (N6-(pyridoxal phosphate)lysine).

The protein belongs to the trans-sulfuration enzymes family. It depends on pyridoxal 5'-phosphate as a cofactor.

Its subcellular location is the cytoplasm. It catalyses the reaction L,L-cystathionine + H2O = L-homocysteine + pyruvate + NH4(+). The catalysed reaction is an S-substituted L-cysteine + H2O = a thiol + pyruvate + NH4(+). Its pathway is amino-acid biosynthesis; L-methionine biosynthesis via de novo pathway; L-homocysteine from L-cystathionine: step 1/1. Its function is as follows. The enzymatic degradation of amino acids in cheese is believed to generate aroma compounds and therefore to be essential for flavor development. Cystathionine beta-lyase (CBL) can convert cystathionine to homocysteine but is also able to catalyze an alpha, gamma elimination. With methionine as a substrate, it produces volatile sulfur compounds which are important for flavor formation in Gouda cheese. The sequence is that of Cystathionine beta-lyase (metC) from Lactococcus lactis subsp. lactis (strain IL1403) (Streptococcus lactis).